Here is a 449-residue protein sequence, read N- to C-terminus: UDP-N-acetylmuramoylalanine--D-glutamate ligase (449 aa).

116 to 122 (GSNGKST) is a binding site for ATP.

Belongs to the MurCDEF family.

It is found in the cytoplasm. The catalysed reaction is UDP-N-acetyl-alpha-D-muramoyl-L-alanine + D-glutamate + ATP = UDP-N-acetyl-alpha-D-muramoyl-L-alanyl-D-glutamate + ADP + phosphate + H(+). The protein operates within cell wall biogenesis; peptidoglycan biosynthesis. Cell wall formation. Catalyzes the addition of glutamate to the nucleotide precursor UDP-N-acetylmuramoyl-L-alanine (UMA). This chain is UDP-N-acetylmuramoylalanine--D-glutamate ligase, found in Shewanella violacea (strain JCM 10179 / CIP 106290 / LMG 19151 / DSS12).